Reading from the N-terminus, the 61-residue chain is Large ribosomal subunit protein bL32 (61 aa).

It belongs to the bacterial ribosomal protein bL32 family.

This is Large ribosomal subunit protein bL32 from Acidithiobacillus ferrooxidans (strain ATCC 23270 / DSM 14882 / CIP 104768 / NCIMB 8455) (Ferrobacillus ferrooxidans (strain ATCC 23270)).